The following is a 414-amino-acid chain: Esterase FrsA (414 aa).

The protein belongs to the FrsA family.

It carries out the reaction a carboxylic ester + H2O = an alcohol + a carboxylate + H(+). In terms of biological role, catalyzes the hydrolysis of esters. This is Esterase FrsA from Shigella boydii serotype 18 (strain CDC 3083-94 / BS512).